A 515-amino-acid chain; its full sequence is Lysine--tRNA ligase (515 aa).

2 residues coordinate Mg(2+): E422 and E429.

It belongs to the class-II aminoacyl-tRNA synthetase family. As to quaternary structure, homodimer. It depends on Mg(2+) as a cofactor.

The protein localises to the cytoplasm. It carries out the reaction tRNA(Lys) + L-lysine + ATP = L-lysyl-tRNA(Lys) + AMP + diphosphate. This chain is Lysine--tRNA ligase, found in Clostridium acetobutylicum (strain ATCC 824 / DSM 792 / JCM 1419 / IAM 19013 / LMG 5710 / NBRC 13948 / NRRL B-527 / VKM B-1787 / 2291 / W).